The primary structure comprises 303 residues: Nucleotide-binding protein USA300HOU_0794 (303 aa).

Position 18–25 (18–25 (GLSGAGKS)) interacts with ATP. Position 69-72 (69-72 (DLRG)) interacts with GTP.

This sequence belongs to the RapZ-like family.

Its function is as follows. Displays ATPase and GTPase activities. This Staphylococcus aureus (strain USA300 / TCH1516) protein is Nucleotide-binding protein USA300HOU_0794.